Reading from the N-terminus, the 796-residue chain is MSSSSIVTSLLRPTTAADGVLPRQMAQVNSSCNIWRSKAKVGGINYFNPGNIKCVEEVHKSRQVVVAALKSLEYETEKPTNQDVVSEKMRVLSERIETMLQNMDEGEISISPYDTAWVALVEDTDGRPQFPTSLEWISNNQLADGSWGDRKFVIYDRILNTLACVVALTTWNMHPHKCNRGLRFIRDNMEKLENENEELMPIGFEVVFPSLIEAAQKLGIEIPHIDSPCIKKIQAMRDFKLKRIPMELLHKKPTSLLHSLEGMQGLVWEKLLDFRSDGSFLCSPSSTAYALQHTKDELCLQYLLKAVKKFNGGVPNVYPVDMFEHLWCVDRLQRLGICRYFRVQIKEMLDYVYKYWTDKGICWARNTNVQDVDDTAMGFRLLRMHGYDVSTDVFKQFEKAGEFCCFPGQSTHAITGMYNVYRTSQIMFDGEDILADAKNYSATFLHQKRLANELVDKWIITKDLPGEVGYALDVPFFASLPRLEARFFLEQYGGDDDVWIGKTLYRMPYVNSDTYLELAKLDYKKCQAVHQLEWKSIQKWYRDCKLGEFGLGEKRLLLAYFLAASTAFEPEKKGERLAWAKTAFLVETIASQQLSHEQKREFADEFEHGSSLNMENGGSYKTRTRLVEILSNTVSQLSFETLVAEGRDIKQQLSNTWQKWLKTWEEGGNLGEAEAQLLLQTLHLSSGLDESSFSHPKYHQLLEVTCKVCNQLRLFQNRKAHDAQGGISDLVIGTTFQIEASMQELVKLVFTKSSEDLDSITKQSFFAIARSFYYTAYCDAGAINSHIYKVLFENID.

A chloroplast-targeting transit peptide spans 1–23 (MSSSSIVTSLLRPTTAADGVLPR). Lys-240 serves as a coordination point for substrate. 2 residues coordinate Mg(2+): Asp-371 and Asp-373. The short motif at 371-374 (DVDD) is the DXDD motif element. Substrate is bound at residue Lys-457.

The protein belongs to the terpene synthase family. Tpsc subfamily. Mg(2+) is required as a cofactor. Highly expressed in leaves, and, at low levels, in stems, but barely in roots and flowers.

The protein resides in the plastid. It localises to the chloroplast. It carries out the reaction (2E,6E,10E)-geranylgeranyl diphosphate = ent-copalyl diphosphate. It functions in the pathway secondary metabolite biosynthesis; terpenoid biosynthesis. In terms of biological role, involved in the biosynthesis of ent-kaurene diterpenoids natural products such as oridonin, miltiradiene, eriocalyxin B and nezukol, known to exhibit antitumor, anti-inflammatory and antibacterial activities. Catalyzes the conversion of (2E,6E,10E)-geranylgeranyl diphosphate (GGPP) to ent-copalyl diphosphate (ent-CPP). The protein is Ent-copalyl diphosphate synthase 4 of Isodon rubescens (Rabdosia rubescens).